The sequence spans 101 residues: Urease subunit beta (101 aa).

This sequence belongs to the urease beta subunit family. As to quaternary structure, heterotrimer of UreA (gamma), UreB (beta) and UreC (alpha) subunits. Three heterotrimers associate to form the active enzyme.

It localises to the cytoplasm. The catalysed reaction is urea + 2 H2O + H(+) = hydrogencarbonate + 2 NH4(+). The protein operates within nitrogen metabolism; urea degradation; CO(2) and NH(3) from urea (urease route): step 1/1. The polypeptide is Urease subunit beta (Rhizobium rhizogenes (strain K84 / ATCC BAA-868) (Agrobacterium radiobacter)).